Consider the following 101-residue polypeptide: Small ribosomal subunit protein uS14 (101 aa).

The disordered stretch occupies residues 53–72 (RDAAAVRVRNRDSHDGRPRG). Over residues 61 to 70 (RNRDSHDGRP) the composition is skewed to basic and acidic residues.

The protein belongs to the universal ribosomal protein uS14 family. As to quaternary structure, part of the 30S ribosomal subunit. Contacts proteins S3 and S10.

Binds 16S rRNA, required for the assembly of 30S particles and may also be responsible for determining the conformation of the 16S rRNA at the A site. This Corynebacterium glutamicum (strain R) protein is Small ribosomal subunit protein uS14.